The sequence spans 513 residues: Keratin, type II cuticular Hb2 (513 aa).

The segment at 1-120 (MSYHSFQPGS…PTVQRVKRDE (120 aa)) is head. Residues 120–431 (EKEQIKCLNN…RLLEGEEHRL (312 aa)) form the IF rod domain. The segment at 121–155 (KEQIKCLNNRFASFINKVRFLEQKNKLLETKWNFM) is coil 1A. The tract at residues 156-165 (QQQRCCQTNI) is linker 1. A coil 1B region spans residues 166 to 266 (EPIFEGYISA…YEEEICLLQS (101 aa)). The tract at residues 267 to 283 (QISETSVIVKMDNSREL) is linker 12. Residues 284 to 427 (DVDGIIAEIK…ATYRRLLEGE (144 aa)) are coil 2. Residues 428 to 513 (EHRLCEGIGP…AGGSSPSHKH (86 aa)) form a tail region.

This sequence belongs to the intermediate filament family. Heterotetramer of two type I and two type II keratins.

The protein is Keratin, type II cuticular Hb2 (KRT82) of Homo sapiens (Human).